The chain runs to 308 residues: tRNA pseudouridine synthase B (308 aa).

The active-site Nucleophile is Asp48.

It belongs to the pseudouridine synthase TruB family. Type 1 subfamily.

The catalysed reaction is uridine(55) in tRNA = pseudouridine(55) in tRNA. Responsible for synthesis of pseudouridine from uracil-55 in the psi GC loop of transfer RNAs. This is tRNA pseudouridine synthase B from Histophilus somni (strain 129Pt) (Haemophilus somnus).